The primary structure comprises 125 residues: Phosphoribosyl-AMP cyclohydrolase (125 aa).

Asp-80 contributes to the Mg(2+) binding site. Position 81 (Cys-81) interacts with Zn(2+). Mg(2+) contacts are provided by Asp-82 and Asp-84. Zn(2+)-binding residues include Cys-97 and Cys-104.

The protein belongs to the PRA-CH family. In terms of assembly, homodimer. The cofactor is Mg(2+). Zn(2+) is required as a cofactor.

The protein localises to the cytoplasm. The catalysed reaction is 1-(5-phospho-beta-D-ribosyl)-5'-AMP + H2O = 1-(5-phospho-beta-D-ribosyl)-5-[(5-phospho-beta-D-ribosylamino)methylideneamino]imidazole-4-carboxamide. Its pathway is amino-acid biosynthesis; L-histidine biosynthesis; L-histidine from 5-phospho-alpha-D-ribose 1-diphosphate: step 3/9. In terms of biological role, catalyzes the hydrolysis of the adenine ring of phosphoribosyl-AMP. The sequence is that of Phosphoribosyl-AMP cyclohydrolase from Leifsonia xyli subsp. xyli (strain CTCB07).